Consider the following 138-residue polypeptide: Large ribosomal subunit protein uL16 (138 aa).

Positions 1–13 (MLQPKRRKYRKEQ) are enriched in basic residues. Positions 1–24 (MLQPKRRKYRKEQKGRNTGKATRG) are disordered.

The protein belongs to the universal ribosomal protein uL16 family. As to quaternary structure, part of the 50S ribosomal subunit.

Functionally, binds 23S rRNA and is also seen to make contacts with the A and possibly P site tRNAs. In Burkholderia multivorans (strain ATCC 17616 / 249), this protein is Large ribosomal subunit protein uL16.